A 158-amino-acid chain; its full sequence is N-acetylgalactosamine-specific phosphotransferase enzyme IIB component 1 (158 aa).

In terms of domain architecture, PTS EIIB type-4 spans 1–158 (MTSPNILLTR…PGDQKEQIPD (158 aa)). The Pros-phosphohistidine intermediate role is filled by histidine 17.

It localises to the cytoplasm. In terms of biological role, the phosphoenolpyruvate-dependent sugar phosphotransferase system (sugar PTS), a major carbohydrate active -transport system, catalyzes the phosphorylation of incoming sugar substrates concomitantly with their translocation across the cell membrane. This system is involved in N-acetylgalactosamine transport. In Escherichia coli (strain K12), this protein is N-acetylgalactosamine-specific phosphotransferase enzyme IIB component 1 (agaB).